Here is a 32-residue protein sequence, read N- to C-terminus: Corticostatin-related peptide RK-1 (32 aa).

Cystine bridges form between cysteine 3–cysteine 29, cysteine 5–cysteine 19, and cysteine 9–cysteine 28.

It localises to the secreted. Functionally, has antimicrobial activity against E.coli and activates ion channel activity. The chain is Corticostatin-related peptide RK-1 from Oryctolagus cuniculus (Rabbit).